Here is a 1087-residue protein sequence, read N- to C-terminus: Error-prone DNA polymerase 3 (1087 aa).

The interval alanine 1040–valine 1064 is disordered.

This sequence belongs to the DNA polymerase type-C family. DnaE2 subfamily.

It localises to the cytoplasm. It carries out the reaction DNA(n) + a 2'-deoxyribonucleoside 5'-triphosphate = DNA(n+1) + diphosphate. Functionally, DNA polymerase involved in damage-induced mutagenesis and translesion synthesis (TLS). It is not the major replicative DNA polymerase. The protein is Error-prone DNA polymerase 3 of Agrobacterium fabrum (strain C58 / ATCC 33970) (Agrobacterium tumefaciens (strain C58)).